Consider the following 142-residue polypeptide: Translation initiation factor 2 subunit beta (142 aa).

It belongs to the eIF-2-beta/eIF-5 family. In terms of assembly, heterotrimer composed of an alpha, a beta and a gamma chain.

Its function is as follows. eIF-2 functions in the early steps of protein synthesis by forming a ternary complex with GTP and initiator tRNA. The protein is Translation initiation factor 2 subunit beta of Staphylothermus marinus (strain ATCC 43588 / DSM 3639 / JCM 9404 / F1).